Reading from the N-terminus, the 121-residue chain is Large ribosomal subunit protein bL12 (121 aa).

This sequence belongs to the bacterial ribosomal protein bL12 family. In terms of assembly, homodimer. Part of the ribosomal stalk of the 50S ribosomal subunit. Forms a multimeric L10(L12)X complex, where L10 forms an elongated spine to which 2 to 4 L12 dimers bind in a sequential fashion. Binds GTP-bound translation factors.

Functionally, forms part of the ribosomal stalk which helps the ribosome interact with GTP-bound translation factors. Is thus essential for accurate translation. This Leuconostoc mesenteroides subsp. mesenteroides (strain ATCC 8293 / DSM 20343 / BCRC 11652 / CCM 1803 / JCM 6124 / NCDO 523 / NBRC 100496 / NCIMB 8023 / NCTC 12954 / NRRL B-1118 / 37Y) protein is Large ribosomal subunit protein bL12.